A 346-amino-acid polypeptide reads, in one-letter code: DNA-directed RNA polymerases I and III subunit RPAC1 (346 aa).

Ala-2 bears the N-acetylalanine mark. Residue Ser-4 is modified to Phosphoserine.

It belongs to the archaeal Rpo3/eukaryotic RPB3 RNA polymerase subunit family. As to quaternary structure, component of the RNA polymerase I and RNA polymerase III complexes consisting of at least 13 and 17 subunits, respectively. Pol I complex consists of a ten-subunit catalytic core composed of POLR1A/RPA1, POLR1B/RPA2, POLR1C/RPAC1, POLR1D/RPAC2, POLR1H/RPA12, POLR2E/RPABC1, POLR2F/RPABC2, POLR2H/RPABC3, POLR2K/RPABC4 and POLR2L/RPABC5; a mobile stalk subunit POLR1F/RPA43 protruding from the core and additional subunits homologous to general transcription factors POLR1E/RPA49 and POLR1G/RPA34. Part of Pol I pre-initiation complex (PIC), in which Pol I core assembles with RRN3 and promoter-bound UTBF and SL1/TIF-IB complex. Pol III complex consists of a ten-subunit catalytic core composed of POLR3A/RPC1, POLR3B/RPC2, POLR1C/RPAC1, POLR1D/RPAC2, POLR3K/RPC10, POLR2E/RPABC1, POLR2F/RPABC2, POLR2H/RPABC3, POLR2K/RPABC4 and POLR2L/RPABC5; a mobile stalk composed of two subunits POLR3H/RPC8 and CRCP/RPC9, protruding from the core and functioning primarily in transcription initiation; and additional subunits homologous to general transcription factors of the RNA polymerase II machinery, POLR3C/RPC3-POLR3F/RPC6-POLR3G/RPC7 heterotrimer required for transcription initiation and POLR3D/RPC4-POLR3E/RPC5 heterodimer involved in both transcription initiation and termination.

It is found in the nucleus. The protein localises to the nucleolus. Its subcellular location is the cytoplasm. The protein resides in the cytosol. Its function is as follows. DNA-dependent RNA polymerase catalyzes the transcription of DNA into RNA using the four ribonucleoside triphosphates as substrates. Common component of RNA polymerases I and III which synthesize ribosomal RNA precursors and short non-coding RNAs including 5S rRNA, snRNAs, tRNAs and miRNAs, respectively. POLR1C/RPAC1 is part of the polymerase core and may function as a clamp element that moves to open and close the cleft. The sequence is that of DNA-directed RNA polymerases I and III subunit RPAC1 from Homo sapiens (Human).